The primary structure comprises 510 residues: Probable cytosol aminopeptidase (510 aa).

Residues K272 and D277 each contribute to the Mn(2+) site. Residue K284 is part of the active site. Mn(2+)-binding residues include D296, D355, and E357. Residue R359 is part of the active site.

The protein belongs to the peptidase M17 family. It depends on Mn(2+) as a cofactor.

Its subcellular location is the cytoplasm. The catalysed reaction is Release of an N-terminal amino acid, Xaa-|-Yaa-, in which Xaa is preferably Leu, but may be other amino acids including Pro although not Arg or Lys, and Yaa may be Pro. Amino acid amides and methyl esters are also readily hydrolyzed, but rates on arylamides are exceedingly low.. It carries out the reaction Release of an N-terminal amino acid, preferentially leucine, but not glutamic or aspartic acids.. Presumably involved in the processing and regular turnover of intracellular proteins. Catalyzes the removal of unsubstituted N-terminal amino acids from various peptides. The chain is Probable cytosol aminopeptidase from Synechococcus sp. (strain JA-2-3B'a(2-13)) (Cyanobacteria bacterium Yellowstone B-Prime).